Here is a 459-residue protein sequence, read N- to C-terminus: Argininosuccinate lyase (459 aa).

This sequence belongs to the lyase 1 family. Argininosuccinate lyase subfamily.

Its subcellular location is the cytoplasm. It catalyses the reaction 2-(N(omega)-L-arginino)succinate = fumarate + L-arginine. It participates in amino-acid biosynthesis; L-arginine biosynthesis; L-arginine from L-ornithine and carbamoyl phosphate: step 3/3. The sequence is that of Argininosuccinate lyase from Desulforudis audaxviator (strain MP104C).